Reading from the N-terminus, the 499-residue chain is DAZ protein 1 (499 aa).

The disordered stretch occupies residues 1-29; the sequence is MMSPPLRYQKDQQNQQHQQNQSQQAAHQM. Residues 12–28 show a composition bias toward low complexity; it reads QQNQQHQQNQSQQAAHQ. Residues 66–144 enclose the RRM domain; the sequence is PNRIFVGGFP…SRKLNLGPAI (79 aa). Positions 195–224 are enriched in low complexity; that stretch reads FVYPPLRSQDQSRQQSEQQTTPQNSPTNLQ. Disordered regions lie at residues 195 to 304 and 406 to 499; these read FVYP…NNGG and YPGN…TKNN. Positions 214–236 constitute a DAZ domain; sequence TTPQNSPTNLQHQQSPQVFFGGD. Basic and acidic residues predominate over residues 251–262; the sequence is EKSEVSPEKHES. Positions 263–279 are enriched in polar residues; it reads VSPQPLLPNQNVLNTQY. Over residues 280 to 304 the composition is skewed to low complexity; that stretch reads SQGQQQWNSNVQQQQQQQMDSNNGG. The segment covering 406–425 has biased composition (polar residues); it reads YPGNFSQQHTMGNNENTFSL. The segment covering 438–447 has biased composition (basic and acidic residues); it reads KPSECQDKKT. The segment covering 480-499 has biased composition (low complexity); that stretch reads LSPLSASLQSLAISSPTKNN.

Belongs to the RRM DAZ family. As to expression, germline specific. More strongly expressed during oogenesis than during spermatogenesis. During the larval stages, it is more abundant at the distal region than the proximal region of the gonad. In young adult hermaphrodites, it is expressed at a very low level in the distal mitotic region of the gonad, and begins to accumulate in the meiotic transition zone. Highly expressed in the proximal pachytene region. Not expressed in mature oocytes. Not expressed in the spermatheca. Weakly or not expressed in the germline of adult males.

Its function is as follows. RNA-binding protein that plays a central role in oogenesis, but not for spermatogenesis. Required for meiotic entry and germline differentiation, at the pachytene stage of meiosis I of female germline regardless of the sex of the soma. May act by regulating translation of specific mRNAs, possibly by binding to their 3'-UTR. This is DAZ protein 1 (daz-1) from Caenorhabditis elegans.